We begin with the raw amino-acid sequence, 252 residues long: Expansin-A12 (252 aa).

Positions 1-23 (MDMKGTYLVTVILLVSTLSVGMC) are cleaved as a signal peptide. The 112-residue stretch at 45 to 156 (GGACGYDNPY…RRVGCKRRGG (112 aa)) folds into the Expansin-like EG45 domain. Positions 166 to 246 (NFNMVMISNV…SWWFGQTFSS (81 aa)) constitute an Expansin-like CBD domain.

It belongs to the expansin family. Expansin A subfamily.

The protein localises to the secreted. Its subcellular location is the cell wall. It localises to the membrane. Causes loosening and extension of plant cell walls by disrupting non-covalent bonding between cellulose microfibrils and matrix glucans. No enzymatic activity has been found. The protein is Expansin-A12 (EXPA12) of Arabidopsis thaliana (Mouse-ear cress).